A 253-amino-acid chain; its full sequence is Phosphoribosylaminoimidazole-succinocarboxamide synthase (253 aa).

The protein belongs to the SAICAR synthetase family.

The enzyme catalyses 5-amino-1-(5-phospho-D-ribosyl)imidazole-4-carboxylate + L-aspartate + ATP = (2S)-2-[5-amino-1-(5-phospho-beta-D-ribosyl)imidazole-4-carboxamido]succinate + ADP + phosphate + 2 H(+). Its pathway is purine metabolism; IMP biosynthesis via de novo pathway; 5-amino-1-(5-phospho-D-ribosyl)imidazole-4-carboxamide from 5-amino-1-(5-phospho-D-ribosyl)imidazole-4-carboxylate: step 1/2. This chain is Phosphoribosylaminoimidazole-succinocarboxamide synthase, found in Dinoroseobacter shibae (strain DSM 16493 / NCIMB 14021 / DFL 12).